The chain runs to 276 residues: Dermonecrotic toxin LlSicTox-alphaIV1i (276 aa).

Residue H5 is part of the active site. Mg(2+)-binding residues include E25 and D27. H41 (nucleophile) is an active-site residue. Intrachain disulfides connect C45–C51 and C47–C193. D85 serves as a coordination point for Mg(2+).

This sequence belongs to the arthropod phospholipase D family. Class II subfamily. Requires Mg(2+) as cofactor. As to expression, expressed by the venom gland.

The protein resides in the secreted. The catalysed reaction is an N-(acyl)-sphingosylphosphocholine = an N-(acyl)-sphingosyl-1,3-cyclic phosphate + choline. The enzyme catalyses an N-(acyl)-sphingosylphosphoethanolamine = an N-(acyl)-sphingosyl-1,3-cyclic phosphate + ethanolamine. It carries out the reaction a 1-acyl-sn-glycero-3-phosphocholine = a 1-acyl-sn-glycero-2,3-cyclic phosphate + choline. It catalyses the reaction a 1-acyl-sn-glycero-3-phosphoethanolamine = a 1-acyl-sn-glycero-2,3-cyclic phosphate + ethanolamine. In terms of biological role, dermonecrotic toxins cleave the phosphodiester linkage between the phosphate and headgroup of certain phospholipids (sphingolipid and lysolipid substrates), forming an alcohol (often choline) and a cyclic phosphate. This toxin acts on sphingomyelin (SM). It may also act on ceramide phosphoethanolamine (CPE), lysophosphatidylcholine (LPC) and lysophosphatidylethanolamine (LPE), but not on lysophosphatidylserine (LPS), and lysophosphatidylglycerol (LPG). It acts by transphosphatidylation, releasing exclusively cyclic phosphate products as second products. Induces dermonecrosis, hemolysis, increased vascular permeability, edema, inflammatory response, and platelet aggregation. The chain is Dermonecrotic toxin LlSicTox-alphaIV1i from Loxosceles laeta (South American recluse spider).